The primary structure comprises 471 residues: Protein hedgehog (471 aa).

The N-palmitoyl cysteine moiety is linked to residue Cys85. Ca(2+) is bound by residues Glu149, Glu150, Asp155, Thr185, Glu186, Asp189, and Asp191. Residue Gly257 is the site of Cholesterol glycine ester attachment.

Belongs to the hedgehog family. In terms of assembly, interacts with shf. Interacts with ptc and CG5504/l(2)tid. In terms of processing, the C-terminal part of the hedgehog protein precursor displays an autoproteolysis activity that results in the cleavage of the full-length protein into two parts (N-product and C-product). In addition, the C-terminal part displays a cholesterol transferase activity that results by the covalent attachment of a cholesterol moiety to the C-terminal of the newly generated N-product. The N-product is the active species in both local and long-range signaling, whereas the C-product has no signaling activity. Cholesterylation is required for N-product targeting to lipid rafts and multimerization. Post-translationally, N-palmitoylation by Rasp of the hedgehog N-product, within the secretory pathway, is required for the embryonic and larval patterning activities of the hedgehog signal. In embryos, expression starts at stage 5 as a few stripes at the anterior and posterior ends, this expands to 17 stripes during stages 8-11. Expression is also seen in CNS and some PNS cells until stage 13-14, and in foregut, hindgut and salivary glands. In larvae, expression is seen in the posterior compartment of the wing, leg and antennal imaginal disks. In adults, high level of expression in specific regions of the proventriculus and hindgut, with slightly lower levels of expression in the posterior midgut. Relatively low levels of expression in the anterior midgut region.

The protein localises to the nucleus. Its subcellular location is the cytoplasm. It localises to the cell membrane. It carries out the reaction glycyl-L-cysteinyl-[protein] + cholesterol + H(+) = [protein]-C-terminal glycyl cholesterol ester + N-terminal L-cysteinyl-[protein]. In terms of biological role, the C-terminal part of the hedgehog protein precursor displays an autoproteolysis activity that results in the cleavage of the full-length protein into two parts (N-product and C-product). In addition, the C-terminal part displays a cholesterol transferase activity that results by the covalent attachment of a cholesterol moiety to the C-terminal of the newly generated N-product. Once cleaved, the C-product has no signaling activity and diffuses from the cell. Functionally, the dually lipidated hedgehog protein N-product is a morphogen which is essential for a variety of patterning events during development. Establishes the anterior-posterior axis of the embryonic segments and patterns the larval imaginal disks. Binds to the patched (ptc) receptor, which functions in association with smoothened (smo), to activate the transcription of target genes wingless (wg), decapentaplegic (dpp) and ptc. In the absence of hh, ptc represses the constitutive signaling activity of smo through fused (fu). Essential component of a signaling pathway which regulates the Duox-dependent gut immune response to bacterial uracil; required to activate Cad99C-dependent endosome formation, norpA-dependent Ca2+ mobilization and p38 MAPK, which are essential steps in the Duox-dependent production of reactive oxygen species (ROS) in response to intestinal bacterial infection. During photoreceptor differentiation, it up-regulates transcription of Ubr3, which in turn promotes the hh-signaling pathway by mediating the ubiquitination and degradation of cos. This is Protein hedgehog from Drosophila melanogaster (Fruit fly).